A 480-amino-acid polypeptide reads, in one-letter code: Glutamate--tRNA ligase (480 aa).

The short motif at 21–31 (PSPTGYLHVGG) is the 'HIGH' region element. Positions 122 to 146 (NTQEQNKQKPRYDRHCLGDHKHSPE) are enriched in basic and acidic residues. Positions 122–149 (NTQEQNKQKPRYDRHCLGDHKHSPEQPH) are disordered. A 'KMSKS' region motif is present at residues 248–252 (KLSKR). Lys251 contributes to the ATP binding site.

It belongs to the class-I aminoacyl-tRNA synthetase family. Glutamate--tRNA ligase type 1 subfamily. As to quaternary structure, monomer.

The protein resides in the cytoplasm. The enzyme catalyses tRNA(Glu) + L-glutamate + ATP = L-glutamyl-tRNA(Glu) + AMP + diphosphate. Functionally, catalyzes the attachment of glutamate to tRNA(Glu) in a two-step reaction: glutamate is first activated by ATP to form Glu-AMP and then transferred to the acceptor end of tRNA(Glu). The protein is Glutamate--tRNA ligase of Pasteurella multocida (strain Pm70).